We begin with the raw amino-acid sequence, 65 residues long: MPGRDQLTGQKALSGNKRSHALNTTKRTFDLNLQKVTVLQENGTKKTLRVTAKNARTLKKLGLVA.

A disordered region spans residues 1–21 (MPGRDQLTGQKALSGNKRSHA).

It belongs to the bacterial ribosomal protein bL28 family.

In Metamycoplasma arthritidis (strain 158L3-1) (Mycoplasma arthritidis), this protein is Large ribosomal subunit protein bL28.